A 200-amino-acid chain; its full sequence is dITP/XTP pyrophosphatase (200 aa).

7-12 (SNNRGK) is a binding site for substrate. The active-site Proton acceptor is D68. D68 contacts Mg(2+). Residues A69, 154–157 (FGFD), K177, and 182–183 (HR) each bind substrate.

This sequence belongs to the HAM1 NTPase family. Homodimer. The cofactor is Mg(2+).

The catalysed reaction is XTP + H2O = XMP + diphosphate + H(+). It carries out the reaction dITP + H2O = dIMP + diphosphate + H(+). The enzyme catalyses ITP + H2O = IMP + diphosphate + H(+). Its function is as follows. Pyrophosphatase that catalyzes the hydrolysis of nucleoside triphosphates to their monophosphate derivatives, with a high preference for the non-canonical purine nucleotides XTP (xanthosine triphosphate), dITP (deoxyinosine triphosphate) and ITP. Seems to function as a house-cleaning enzyme that removes non-canonical purine nucleotides from the nucleotide pool, thus preventing their incorporation into DNA/RNA and avoiding chromosomal lesions. This chain is dITP/XTP pyrophosphatase, found in Delftia acidovorans (strain DSM 14801 / SPH-1).